A 685-amino-acid chain; its full sequence is MGKRNKKVTQGKRAYNDKSEIVLENKQFEGYYKKQNLFRGKPNDEFDSFMEYMRKPLPTTFRICGYRHHAFELKNHFEKYYVPSLKNVVHEGQTIPPPTVLPWYPDGLAYIVDAQKDVIRKSPPLKRLQRFLVSENEAGNINRQEAVSMLPPLFLDVEPHHVILDMCAAPGSKTAQLIEAVYKKANIKDAAHDSKNLKSVEGLVIANDADPKRAQMLVHQINRLNSPNILVVNHDASTMPNIYVKGSSPSDGLNVIEEKKILKFDRILADVPCSGDGTFRKNLSLWREWSANSAFSLHPLQLRILIRGLQLLKVGGCLVYSTCSINPIENEAVVTAALKATGGAVSLVDVSKKLPLLKRDPGLLSWKVLDDSLNEFQSPAENTNDKIELTESMWPLPEEEMSKLHIERCARLYPHMQNTGGFFVAVLQKTDPINSRSFDPKKYTASMEILPPENKRQRTEKGVDEASNSTLTKSGNSYFDEEPFVYINPDDTSIKTIVDFYGIDPSFPRDQFFVRNQSGIPVRSIYFACSLFKEIIEANTNRVKFVHGGVRFFVKQEISQLLKDFSLKANKDICNFRIHSNGVNIISPFLNEKHFYDAGLKDLKILVKNEYPHVEQFSESGMLKKEFEKMPLGCNILRVDAQTKDGALMDMLILQPIWRSPTSCNLMLARKEKQNLSLELFGMDV.

Residues 167-173 (CAAPGSK), Asp-208, Asp-235, and Asp-270 contribute to the S-adenosyl-L-methionine site. Residue Cys-323 is the Nucleophile of the active site.

Belongs to the class I-like SAM-binding methyltransferase superfamily. RsmB/NOP family. TRM4 subfamily.

It is found in the nucleus. The enzyme catalyses cytidine(49) in tRNA precursor + S-adenosyl-L-methionine = 5-methylcytidine(49) in tRNA precursor + S-adenosyl-L-homocysteine + H(+). The catalysed reaction is cytidine(50) in tRNA + S-adenosyl-L-methionine = 5-methylcytidine(50) in tRNA + S-adenosyl-L-homocysteine + H(+). It carries out the reaction cytidine(60) in tRNA(Asp) + S-adenosyl-L-methionine = 5-methylcytidine(60) in tRNA(Asp) + S-adenosyl-L-homocysteine + H(+). It catalyses the reaction cytidine(61) in tRNA(Asp) + S-adenosyl-L-methionine = 5-methylcytidine(61) in tRNA(Asp) + S-adenosyl-L-homocysteine + H(+). The enzyme catalyses cytidine(62) in tRNA(Asp) + S-adenosyl-L-methionine = 5-methylcytidine(62) in tRNA(Asp) + S-adenosyl-L-homocysteine + H(+). In terms of biological role, tRNA cytosine C(5)-methyltransferase that methylates cytosine to 5-methylcytosine (m5C) in tRNAs at position 49 and 50. Trm4a and trm4b methylate different sets of tRNAs. Also methylates cytosine to m5C at positions (60, 61 and 62) in tRNA(Asp). The sequence is that of Multisite-specific tRNA:(cytosine-C(5))-methyltransferase trm4b from Schizosaccharomyces pombe (strain 972 / ATCC 24843) (Fission yeast).